A 181-amino-acid polypeptide reads, in one-letter code: ATP synthase subunit delta (181 aa).

Belongs to the ATPase delta chain family. In terms of assembly, F-type ATPases have 2 components, F(1) - the catalytic core - and F(0) - the membrane proton channel. F(1) has five subunits: alpha(3), beta(3), gamma(1), delta(1), epsilon(1). F(0) has three main subunits: a(1), b(2) and c(10-14). The alpha and beta chains form an alternating ring which encloses part of the gamma chain. F(1) is attached to F(0) by a central stalk formed by the gamma and epsilon chains, while a peripheral stalk is formed by the delta and b chains.

The protein localises to the cell membrane. Functionally, f(1)F(0) ATP synthase produces ATP from ADP in the presence of a proton or sodium gradient. F-type ATPases consist of two structural domains, F(1) containing the extramembraneous catalytic core and F(0) containing the membrane proton channel, linked together by a central stalk and a peripheral stalk. During catalysis, ATP synthesis in the catalytic domain of F(1) is coupled via a rotary mechanism of the central stalk subunits to proton translocation. Its function is as follows. This protein is part of the stalk that links CF(0) to CF(1). It either transmits conformational changes from CF(0) to CF(1) or is implicated in proton conduction. This chain is ATP synthase subunit delta, found in Clostridium kluyveri (strain NBRC 12016).